The chain runs to 108 residues: Phosphoribosyl-ATP pyrophosphatase (108 aa).

It belongs to the PRA-PH family.

The protein localises to the cytoplasm. It carries out the reaction 1-(5-phospho-beta-D-ribosyl)-ATP + H2O = 1-(5-phospho-beta-D-ribosyl)-5'-AMP + diphosphate + H(+). Its pathway is amino-acid biosynthesis; L-histidine biosynthesis; L-histidine from 5-phospho-alpha-D-ribose 1-diphosphate: step 2/9. This chain is Phosphoribosyl-ATP pyrophosphatase, found in Trichlorobacter lovleyi (strain ATCC BAA-1151 / DSM 17278 / SZ) (Geobacter lovleyi).